The sequence spans 274 residues: 2,3,4,5-tetrahydropyridine-2,6-dicarboxylate N-succinyltransferase (274 aa).

The substrate site is built by Arg-106 and Asp-143.

It belongs to the transferase hexapeptide repeat family. Homotrimer.

The protein resides in the cytoplasm. The enzyme catalyses (S)-2,3,4,5-tetrahydrodipicolinate + succinyl-CoA + H2O = (S)-2-succinylamino-6-oxoheptanedioate + CoA. It participates in amino-acid biosynthesis; L-lysine biosynthesis via DAP pathway; LL-2,6-diaminopimelate from (S)-tetrahydrodipicolinate (succinylase route): step 1/3. This Rickettsia prowazekii (strain Madrid E) protein is 2,3,4,5-tetrahydropyridine-2,6-dicarboxylate N-succinyltransferase.